The following is a 387-amino-acid chain: Phosphoglycerate kinase (387 aa).

Substrate is bound by residues 21–23 (DLN), arginine 36, 59–62 (HLGR), arginine 113, and arginine 146. ATP contacts are provided by residues lysine 197, glutamate 314, and 340–343 (GGDT).

It belongs to the phosphoglycerate kinase family. As to quaternary structure, monomer.

The protein localises to the cytoplasm. The enzyme catalyses (2R)-3-phosphoglycerate + ATP = (2R)-3-phospho-glyceroyl phosphate + ADP. The protein operates within carbohydrate degradation; glycolysis; pyruvate from D-glyceraldehyde 3-phosphate: step 2/5. The protein is Phosphoglycerate kinase of Yersinia pestis bv. Antiqua (strain Antiqua).